Consider the following 208-residue polypeptide: Urease accessory protein UreG 2 (208 aa).

A GTP-binding site is contributed by 16 to 23; sequence GPVGSGKT.

It belongs to the SIMIBI class G3E GTPase family. UreG subfamily. As to quaternary structure, homodimer. UreD, UreF and UreG form a complex that acts as a GTP-hydrolysis-dependent molecular chaperone, activating the urease apoprotein by helping to assemble the nickel containing metallocenter of UreC. The UreE protein probably delivers the nickel.

The protein localises to the cytoplasm. Facilitates the functional incorporation of the urease nickel metallocenter. This process requires GTP hydrolysis, probably effectuated by UreG. The sequence is that of Urease accessory protein UreG 2 from Methylobacterium radiotolerans (strain ATCC 27329 / DSM 1819 / JCM 2831 / NBRC 15690 / NCIMB 10815 / 0-1).